The sequence spans 233 residues: MRHNIKFKSKGTLKIRNTAQISLWKKCSDSMIADQTYLFINRVQDRRFDEESLRILELSLVAMNVKSFLEVRSRLRDFMRSESVVIFGELTGESMVAKLSVLEFFARAFALLGDMESCLAMRYEALNLRQLKSPSCLWLGVSHSEWTKFAVQSMENGFPSIAGKASENALLSLKKDSLIEPKSEDNSDILDAAEKVRRLRDSAASLTSSHSGIFIYIVSSLKFAVCNRLLTTF.

Interacts with PRD1; this interaction facilitates a binding to PRD3. Specifically expressed in buds.

Its function is as follows. Required for meiotic double-strand break (DSB) formation, the initial event for meiotic recombination. In Arabidopsis thaliana (Mouse-ear cress), this protein is Protein DOUBLE-STRAND BREAK FORMATION.